Reading from the N-terminus, the 212-residue chain is Ribosomal RNA large subunit methyltransferase E (212 aa).

Residues 1 to 26 form a disordered region; the sequence is MPAERPSVSQKPKNPYKRPDAFTKAA. Residues glycine 63, tryptophan 65, aspartate 83, aspartate 101, and aspartate 122 each contribute to the S-adenosyl-L-methionine site. Lysine 162 functions as the Proton acceptor in the catalytic mechanism.

The protein belongs to the class I-like SAM-binding methyltransferase superfamily. RNA methyltransferase RlmE family.

The protein localises to the cytoplasm. The enzyme catalyses uridine(2552) in 23S rRNA + S-adenosyl-L-methionine = 2'-O-methyluridine(2552) in 23S rRNA + S-adenosyl-L-homocysteine + H(+). Functionally, specifically methylates the uridine in position 2552 of 23S rRNA at the 2'-O position of the ribose in the fully assembled 50S ribosomal subunit. The sequence is that of Ribosomal RNA large subunit methyltransferase E from Sorangium cellulosum (strain So ce56) (Polyangium cellulosum (strain So ce56)).